Reading from the N-terminus, the 51-residue chain is Large ribosomal subunit protein bL33 (51 aa).

It belongs to the bacterial ribosomal protein bL33 family.

The protein is Large ribosomal subunit protein bL33 of Pseudomonas putida (strain ATCC 47054 / DSM 6125 / CFBP 8728 / NCIMB 11950 / KT2440).